A 77-amino-acid chain; its full sequence is uncharacterized protein (77 aa).

A disordered region spans residues 53–77 (KRVSSEANKEKSDITELLRKQVRPD).

This is an uncharacterized protein from Escherichia coli (strain K12).